Consider the following 512-residue polypeptide: Hyaluronidase PH-20 (512 aa).

An N-terminal signal peptide occupies residues 1–35 (MGELQFKWLFWRSFAESGGTFQTVLIFLFIPYSLT). Cystine bridges form between Cys-60–Cys-351 and Cys-223–Cys-237. An N-linked (GlcNAc...) asparagine glycan is attached at Asn-63. The active-site Proton donor is Glu-147. N-linked (GlcNAc...) asparagine glycosylation is found at Asn-165 and Asn-179. N-linked (GlcNAc...) asparagine glycosylation occurs at Asn-368. Intrachain disulfides connect Cys-376–Cys-387, Cys-381–Cys-435, and Cys-437–Cys-464. Asn-408 carries an N-linked (GlcNAc...) asparagine glycan.

This sequence belongs to the glycosyl hydrolase 56 family.

The protein localises to the cell membrane. It carries out the reaction Random hydrolysis of (1-&gt;4)-linkages between N-acetyl-beta-D-glucosamine and D-glucuronate residues in hyaluronate.. Functionally, involved in sperm-egg adhesion. Upon fertilization sperm must first penetrate a layer of cumulus cells that surrounds the egg before reaching the zona pellucida. The cumulus cells are embedded in a matrix containing hyaluronic acid which is formed prior to ovulation. This protein aids in penetrating the layer of cumulus cells by digesting hyaluronic acid. The protein is Hyaluronidase PH-20 (Spam1) of Rattus norvegicus (Rat).